Reading from the N-terminus, the 348-residue chain is MTAPSQVLKIRRPDDWHLHLRDGDMLKTVVPYTSEIYGRAIVMPNLAPPVTTVEAAVAYRQRILDAVPAGHDFTPLMTCYLTDSLDPNELERGFNEAVFTAAKLYPANATTNSSHGVTSIDAIMPVLERMEKIGMPLLVHGEVTHADIDIFDREARFIESVMEPLRQRLTALKVVFEHITTKDAADYVRDGNERLAATITPQHLMFNRNHMLVGGVRPHLYCLPILKRNIHQQALRELVASGFNRVFLGTDSAPHARHRKESSCGCAGCFNAPTALGSYATVFEEMNALQHFEAFCSVNGPQFYGLPVNDTFIELVREEQQVAESIALTDDTLVPFLAGETVRWSVKQ.

Residues histidine 17 and histidine 19 each contribute to the Zn(2+) site. Substrate contacts are provided by residues 19 to 21 and asparagine 45; that span reads HLR. Zn(2+) contacts are provided by lysine 103, histidine 140, and histidine 178. N6-carboxylysine is present on lysine 103. Histidine 140 lines the substrate pocket. Leucine 223 contributes to the substrate binding site. Aspartate 251 contributes to the Zn(2+) binding site. Aspartate 251 is an active-site residue. Substrate is bound by residues histidine 255 and alanine 267.

Belongs to the metallo-dependent hydrolases superfamily. DHOase family. Class II DHOase subfamily. Homodimer. Requires Zn(2+) as cofactor.

The enzyme catalyses (S)-dihydroorotate + H2O = N-carbamoyl-L-aspartate + H(+). It participates in pyrimidine metabolism; UMP biosynthesis via de novo pathway; (S)-dihydroorotate from bicarbonate: step 3/3. In terms of biological role, catalyzes the reversible cyclization of carbamoyl aspartate to dihydroorotate. The polypeptide is Dihydroorotase (Shigella flexneri).